A 467-amino-acid chain; its full sequence is Cysteine--tRNA ligase (467 aa).

Zn(2+) is bound at residue C30. The 'HIGH' region signature appears at 32-42; that stretch reads PTVYDDSHLGH. C209, H239, and E243 together coordinate Zn(2+). Residues 271-275 carry the 'KMSKS' region motif; the sequence is KMSKS. K274 provides a ligand contact to ATP.

Belongs to the class-I aminoacyl-tRNA synthetase family. As to quaternary structure, monomer. It depends on Zn(2+) as a cofactor.

It localises to the cytoplasm. It catalyses the reaction tRNA(Cys) + L-cysteine + ATP = L-cysteinyl-tRNA(Cys) + AMP + diphosphate. The protein is Cysteine--tRNA ligase of Aliarcobacter butzleri (strain RM4018) (Arcobacter butzleri).